A 576-amino-acid polypeptide reads, in one-letter code: Sulfite reductase [NADPH] hemoprotein beta-component (576 aa).

[4Fe-4S] cluster contacts are provided by Cys-434, Cys-440, Cys-479, and Cys-483. Cys-483 provides a ligand contact to siroheme.

This sequence belongs to the nitrite and sulfite reductase 4Fe-4S domain family. Alpha(8)-beta(8). The alpha component is a flavoprotein, the beta component is a hemoprotein. The cofactor is siroheme. It depends on [4Fe-4S] cluster as a cofactor.

The catalysed reaction is hydrogen sulfide + 3 NADP(+) + 3 H2O = sulfite + 3 NADPH + 4 H(+). Its pathway is sulfur metabolism; hydrogen sulfide biosynthesis; hydrogen sulfide from sulfite (NADPH route): step 1/1. In terms of biological role, component of the sulfite reductase complex that catalyzes the 6-electron reduction of sulfite to sulfide. This is one of several activities required for the biosynthesis of L-cysteine from sulfate. The sequence is that of Sulfite reductase [NADPH] hemoprotein beta-component from Oceanobacillus iheyensis (strain DSM 14371 / CIP 107618 / JCM 11309 / KCTC 3954 / HTE831).